A 275-amino-acid chain; its full sequence is Axoneme-associated protein mst101(3) (275 aa).

A run of 12 repeats spans residues 64 to 79 (KKKC…EAAE), 80 to 95 (KKKC…EAAE), 96 to 111 (KKKC…EAAQ), 112 to 127 (KKKC…EAAE), 128 to 143 (KKKC…EAAE), 144 to 159 (RKKC…CEEA), 160 to 175 (AKKK…LQQK), 181 to 196 (KKEK…EEAA), 197 to 212 (KKKA…AEEV), 215 to 230 (KKKA…CAEA), 231 to 246 (KKKA…CEEA), and 249 to 264 (KKMC…CAEA). The tract at residues 64-264 (KKKCAEAAKK…AALQKKCAEA (201 aa)) is 12 X 16 AA tandem repeats of [KRA]-K-[KEM]-[CKA]-[AEKD]-[EA]-[ALE]-[AMK]-[FKAML]-[KQA]-[EQKA]-[KQCEM]-[ECLA]-[AEQ]-[AEQ]-[EQAKV].

As to expression, testis.

The protein resides in the cytoplasm. Functionally, possible structural role in the sperm tail. In Drosophila hydei (Fruit fly), this protein is Axoneme-associated protein mst101(3) (mst101(3)).